Consider the following 405-residue polypeptide: MLQRCIKCGKTYDVDEIIYTCECGGLLEIIYDYEEIKDKVSEEKLRKREIGVWRYLEYLPVKDESKIVSLCEGGTPLYRCNNLEKELGIKELYVKNEGANPTGSFKDRGMTVGVTRANELGVEVVGCASTGNTSASLAAYSARSGKKCIVLLPEGKVALGKLAQAMFYGAKVIQVKGNFDDALDMVKQLAKEKLIYLLNSINPFRLEGQKTIAFEICDQLNWQVPDRVIVPVGNAGNISAIWKGFKEFEITGIIDELPKMTGIQADGAKPIVEAFRKRAKDIIPYKNPETIATAIRIGNPVNAPKALDAIYSSGGYAEAVTDEEIVEAQKLLARKEGIFVEPASASSIAGLKKLLEEGIIDRDERIVCITTGHGLKDPDAAIRASEEPIKIECDMNVLKRILKEL.

An N6-(pyridoxal phosphate)lysine modification is found at Lys106. Residues Asn132, Gly233 to Asn237, and Thr371 contribute to the pyridoxal 5'-phosphate site.

This sequence belongs to the threonine synthase family. It depends on pyridoxal 5'-phosphate as a cofactor.

It catalyses the reaction O-phospho-L-homoserine + H2O = L-threonine + phosphate. It participates in amino-acid biosynthesis; L-threonine biosynthesis; L-threonine from L-aspartate: step 5/5. In terms of biological role, catalyzes the gamma-elimination of phosphate from L-phosphohomoserine and the beta-addition of water to produce L-threonine. The polypeptide is Threonine synthase (thrC) (Methanocaldococcus jannaschii (strain ATCC 43067 / DSM 2661 / JAL-1 / JCM 10045 / NBRC 100440) (Methanococcus jannaschii)).